We begin with the raw amino-acid sequence, 281 residues long: uncharacterized protein (281 aa).

The protein localises to the plastid. The protein resides in the chloroplast. This is an uncharacterized protein from Euglena gracilis.